The sequence spans 187 residues: UPF0301 protein KPN78578_33170 (187 aa).

This sequence belongs to the UPF0301 (AlgH) family.

The polypeptide is UPF0301 protein KPN78578_33170 (Klebsiella pneumoniae subsp. pneumoniae (strain ATCC 700721 / MGH 78578)).